A 716-amino-acid polypeptide reads, in one-letter code: MGETKIIYHLDGQETPYLVKLPLPAERVTLADFKGVLQRPSYKFFFKSMDDDFGVVKEEISDDNAKLPCFNGRVVSWLVSAEGSHPDPAPFCADNPSELPPPMERTGGIGDSRPPSFHPHAGGGSQENLDNDTETDSLVSAQRERPRRRDGPEHATRLNGTAKGERRREPGGYDSSSTLMSSELETTSFFDSDEDDSTSRFSSSTEQSSASRLMRRHKRRRRKQKVSRIERSSSFSSITDSTMSLNIITVTLNMEKYNFLGISIVGQSNERGDGGIYIGSIMKGGAVAADGRIEPGDMLLQVNEINFENMSNDDAVRVLREIVHKPGPITLTVAKCWDPSPRGCFTLPRSEPIRPIDPAAWVSHTAAMTGTFPAYGMSPSLSTITSTSSSITSSIPDTERLDDFHLSIHSDMAAIVKAMASPESGLEVRDRMWLKITIPNAFIGSDVVDWLYHNVEGFTDRREARKYASNLLKAGFIRHTVNKITFSEQCYYIFGDLCGNMANLSLHDHDGSSGASDQDTLAPLPHPGAAPWPMAFPYQYPPPPHPYNPHPGFPELGYSYGGGSASSQHSEGSRSSGSNRSGSDRRKEKDPKAGDSKSGGSGSESDHTTRSSLRGPRERAPSERSGPAASEHSHRSHHSLASSLRSHHTHPSYGPPGVPPLYGPPMLMMPPPPAAMGPPGAPPGRDLASVPPELTASRQSFRMAMGNPSEFFVDVM.

Residues M1–E82 form the DIX domain. R27 is subject to Omega-N-methylarginine. Residues S48 and S125 each carry the phosphoserine modification. Residues H85 to F235 are disordered. A compositionally biased stretch (basic and acidic residues) spans Q142–T156. A compositionally biased stretch (low complexity) spans S175–F190. S192 is modified (phosphoserine). Positions S199–R212 are enriched in low complexity. R212 carries the omega-N-methylarginine modification. Basic residues predominate over residues L213–V226. In terms of domain architecture, PDZ spans T249 to E321. Position 271 is an asymmetric dimethylarginine; by PRMT1; alternate (R271). 2 positions are modified to symmetric dimethylarginine; by PRMT7; alternate: R271 and R342. R342 carries the omega-N-methylarginine; alternate modification. T346 carries the post-translational modification Phosphothreonine. The region spanning P422–D496 is the DEP domain. The interval P546–P691 is disordered. Residues A565–S581 are compositionally biased toward low complexity. Basic and acidic residues-rich tracts occupy residues G582–D595 and E604–S622. R614 bears the Symmetric dimethylarginine; by PRMT7 mark. The span at Y653–P682 shows a compositional bias: pro residues. S697 is subject to Phosphoserine. R698 carries the omega-N-methylarginine; alternate modification. R698 is modified (dimethylated arginine; alternate). S700 carries the phosphoserine modification.

It belongs to the DSH family. Interacts (via the PDZ domain) with the C-terminal regions of VANGL1 and VANGL2. Interacts (via the region containing both the PDZ and DEP domains) with LRRFIP2; the DIX domain may inhibit this interaction. Interacts with CYLD, CEP164 and DAB2. Interacts with DCDC2. Interacts with FOXK1 and FOXK2. Interacts with DAAM2. Post-translationally, ubiquitinated. Deubiquitinated by CYLD, which acts on 'Lys-63'-linked ubiquitin chains. Phosphorylated by CSNK1D. In terms of processing, arginine methylation may function as a switch in regulation of function in Wnt signaling.

Its subcellular location is the cytoplasm. In terms of biological role, involved in the signal transduction pathway mediated by multiple Wnt genes. The chain is Segment polarity protein dishevelled homolog DVL-3 (DVL3) from Homo sapiens (Human).